Consider the following 277-residue polypeptide: uncharacterized protein (277 aa).

The next 5 membrane-spanning stretches (helical) occupy residues 46-66 (IAAI…YGGL), 73-93 (LFEG…ILWM), 143-163 (TTVI…VLIL), 174-194 (FFYA…GYGT), and 228-248 (KGLI…MEWV).

Belongs to the oxidase-dependent Fe transporter (OFeT) (TC 9.A.10.1) family.

It is found in the cell membrane. This is an uncharacterized protein from Archaeoglobus fulgidus (strain ATCC 49558 / DSM 4304 / JCM 9628 / NBRC 100126 / VC-16).